Reading from the N-terminus, the 126-residue chain is Aspartate 1-decarboxylase (126 aa).

Residue Ser-25 is the Schiff-base intermediate with substrate; via pyruvic acid of the active site. The residue at position 25 (Ser-25) is a Pyruvic acid (Ser). A substrate-binding site is contributed by Thr-57. The active-site Proton donor is Tyr-58. Substrate is bound at residue 73–75 (GAA).

Belongs to the PanD family. Heterooctamer of four alpha and four beta subunits. Pyruvate serves as cofactor. In terms of processing, is synthesized initially as an inactive proenzyme, which is activated by self-cleavage at a specific serine bond to produce a beta-subunit with a hydroxyl group at its C-terminus and an alpha-subunit with a pyruvoyl group at its N-terminus.

Its subcellular location is the cytoplasm. It catalyses the reaction L-aspartate + H(+) = beta-alanine + CO2. Its pathway is cofactor biosynthesis; (R)-pantothenate biosynthesis; beta-alanine from L-aspartate: step 1/1. Its function is as follows. Catalyzes the pyruvoyl-dependent decarboxylation of aspartate to produce beta-alanine. The chain is Aspartate 1-decarboxylase from Marinomonas sp. (strain MWYL1).